A 128-amino-acid chain; its full sequence is uncharacterized protein (128 aa).

Residues 18–116 enclose the HTH hxlR-type domain; that stretch reads CPVETTLDII…WGEKYKDRID (99 aa).

This is an uncharacterized protein from Bacillus subtilis (strain 168).